Reading from the N-terminus, the 594-residue chain is Golgi-associated RAB2 interactor protein 4 (594 aa).

Residues 390 to 525 (AAGLPVSTRQ…SSGSSKRLGR (136 aa)) are disordered. Residues 396–406 (STRQSKSSLSG) show a composition bias toward polar residues. Basic and acidic residues-rich tracts occupy residues 408–433 (HGRERTQASAEACKEGRERREKDKAL), 442–455 (TGESRHKTRGDKIA), and 468–477 (ASRDGKKEKG). The segment covering 510–521 (RSSSTTSSGSSK) has biased composition (low complexity).

The protein belongs to the GARIN family. Interacts (via N-terminus) with RAB2B (in GTP-bound form).

It localises to the golgi apparatus. Functionally, RAB2B effector protein required for the compacted Golgi morphology, probably through interaction with small GTPase RAB2B. The sequence is that of Golgi-associated RAB2 interactor protein 4 (GARIN4) from Macaca fascicularis (Crab-eating macaque).